The primary structure comprises 262 residues: MLIFDSGVGGLSILKNIKKILPNIHYIYMLDNESFPYGNKTEFFIIQRSIKIIHTIKKIYPINVVVIACNTISTVALSILRKKFDIPIFGIFPHIKAAEKITKNKIIGLIATKATINSSYTQKIIYEYSCSNTIKIIGTNKLAVIAEKKIRGVAVSQKKLKNIFRPWINLPTCPDTIILGCTHFSLLEKEIKNILYKTRSVYFIDSIKKVIFQIESYLKTSNVNQKIKKNIFLYSKNNNNLKKLLSFLKQYKFTVIKHINLN.

Residues 5-6 and 37-38 each bind substrate; these read DS and YG. The active-site Proton donor/acceptor is Cys-69. A substrate-binding site is contributed by 70-71; the sequence is NT. The active-site Proton donor/acceptor is the Cys-181. 182 to 183 contacts substrate; that stretch reads TH.

This sequence belongs to the aspartate/glutamate racemases family.

The catalysed reaction is L-glutamate = D-glutamate. The protein operates within cell wall biogenesis; peptidoglycan biosynthesis. Provides the (R)-glutamate required for cell wall biosynthesis. The chain is Glutamate racemase from Buchnera aphidicola subsp. Acyrthosiphon pisum (strain APS) (Acyrthosiphon pisum symbiotic bacterium).